Consider the following 27-residue polypeptide: Dermaseptin-S4 (27 aa).

It belongs to the frog skin active peptide (FSAP) family. Dermaseptin subfamily. As to quaternary structure, monomer and oligomer. Forms aggregates in aqueous environments. As to expression, expressed by the skin glands.

Its subcellular location is the secreted. Potent antimicrobial peptide with activity against bacteria and protozoa. Also has activity against fungi. Also shows activity against enveloped herpes simplex virus type 1. Probably acts by disturbing membrane functions with its amphipathic structure. Binds to healthy erythrocytes (this binding is receptor independent), and has strong hemolytic activity. Does not bind to P.falciparum infected erythrocytes, but accumulates within the parasite. Kills the parasite, and only at high concentrations has a hemolytic activity on the host cell. In vitro, shows high spermicidal activities. In Phyllomedusa sauvagei (Sauvage's leaf frog), this protein is Dermaseptin-S4.